The following is a 202-amino-acid chain: LexA repressor (202 aa).

Positions 28–48 (QQEIARAFGFRSLGTVRNYLV) form a DNA-binding region, H-T-H motif. Active-site for autocatalytic cleavage activity residues include Ser-120 and Lys-157.

The protein belongs to the peptidase S24 family. In terms of assembly, homodimer.

The catalysed reaction is Hydrolysis of Ala-|-Gly bond in repressor LexA.. Represses a number of genes involved in the response to DNA damage (SOS response), including recA and lexA. In the presence of single-stranded DNA, RecA interacts with LexA causing an autocatalytic cleavage which disrupts the DNA-binding part of LexA, leading to derepression of the SOS regulon and eventually DNA repair. The protein is LexA repressor of Syntrophotalea carbinolica (strain DSM 2380 / NBRC 103641 / GraBd1) (Pelobacter carbinolicus).